The primary structure comprises 343 residues: Heat-inducible transcription repressor HrcA (343 aa).

This sequence belongs to the HrcA family.

In terms of biological role, negative regulator of class I heat shock genes (grpE-dnaK-dnaJ and groELS operons). Prevents heat-shock induction of these operons. This is Heat-inducible transcription repressor HrcA from Bacillus velezensis (strain DSM 23117 / BGSC 10A6 / LMG 26770 / FZB42) (Bacillus amyloliquefaciens subsp. plantarum).